The chain runs to 68 residues: uncharacterized protein (68 aa).

A signal peptide spans 1 to 27 (MKGLLCFIYILSAILIGCVFLNKDVEA).

This is an uncharacterized protein from Invertebrate iridescent virus 6 (IIV-6).